The chain runs to 434 residues: Enolase (434 aa).

Residue Gln-163 coordinates (2R)-2-phosphoglycerate. Residue Glu-205 is the Proton donor of the active site. 3 residues coordinate Mg(2+): Asp-242, Glu-291, and Asp-318. Positions 343, 372, 373, and 394 each coordinate (2R)-2-phosphoglycerate. The active-site Proton acceptor is Lys-343.

It belongs to the enolase family. Mg(2+) serves as cofactor.

It is found in the cytoplasm. The protein localises to the secreted. Its subcellular location is the cell surface. It carries out the reaction (2R)-2-phosphoglycerate = phosphoenolpyruvate + H2O. It functions in the pathway carbohydrate degradation; glycolysis; pyruvate from D-glyceraldehyde 3-phosphate: step 4/5. Its function is as follows. Catalyzes the reversible conversion of 2-phosphoglycerate (2-PG) into phosphoenolpyruvate (PEP). It is essential for the degradation of carbohydrates via glycolysis. The protein is Enolase of Streptococcus sanguinis (strain SK36).